The sequence spans 3999 residues: Hybrid PKS-NRPS synthetase xenE (3999 aa).

A Ketosynthase family 3 (KS3) domain is found at 13–449; sequence REPIAVVGSG…GTNAHCIIEN (437 aa). Active-site for beta-ketoacyl synthase activity residues include C186, H325, and H369. Residues 562–879 enclose the Malonyl-CoA:ACP transacylase (MAT) domain; that stretch reads VFTGQGAQWP…TGLLNRGKDD (318 aa). Residues 949–1084 form an N-terminal hotdog fold region; the sequence is NPLLGSRTTD…GRVIVITGET (136 aa). One can recognise a PKS/mFAS DH domain in the interval 949 to 1253; it reads NPLLGSRTTD…VVAFAEQTED (305 aa). The interval 950–1252 is dehydratase (DH) domain; it reads PLLGSRTTDV…RVVAFAEQTE (303 aa). Residue H981 is the Proton acceptor; for dehydratase activity of the active site. A C-terminal hotdog fold region spans residues 1099–1253; it reads LVDIPEDRFY…VVAFAEQTED (155 aa). D1159 (proton donor; for dehydratase activity) is an active-site residue. The segment at 1298–1593 is methyltransferase (cMeT) domain; that stretch reads YMKQLVTLFP…FSGADSPMPE (296 aa). The Ketoreductase (KR) domain occupies 2133–2306; it reads TYVLFGLTSD…AASILHLGAV (174 aa). The Carrier 1 domain maps to 2414–2495; it reads EEILEIVQDA…QLVEYAIGSM (82 aa). Position 2455 is an O-(pantetheine 4'-phosphoryl)serine (S2455). A disordered region spans residues 2501 to 2573; that stretch reads PNRADSAKAS…EESPSESVND (73 aa). Positions 2526–2554 are enriched in low complexity; that stretch reads SVSSSPSSLPKTSASGSSQQMSEGSSKTS. Positions 2580-3015 are condensation; that stretch reads EKVLPVSPGQ…EEVSLFTEQE (436 aa). The interval 3045-3453 is adenylation; that stretch reads AVHTDKVALK…RIEGDTQIKL (409 aa). Residues 3562–3642 form the Carrier 2 domain; that stretch reads RKLTDTESKL…AMAAAIQDTS (81 aa). An O-(pantetheine 4'-phosphoryl)serine modification is found at S3602. Residues 3681 to 3900 are reductase-like (R) domain (R); sequence LTGATGFLGK…IDLITVEKAA (220 aa).

This sequence in the C-terminal section; belongs to the NRP synthetase family.

The protein operates within mycotoxin biosynthesis. In terms of biological role, hybrid PKS-NRPS synthetase; part of the gene cluster that mediates the biosynthesis of xenoacremones such as xenoacremone A, a compound that shows inhibitory activity toward the PI3K/AKT signaling pathway and which has the ability to induce apoptosis of A549 lung cancer cells. Within the pathway, cooperation of the hybrid PKS-NRPS xenE and the trans-acting enoyl reductase xenG is responsible for the formation of the reduced tyrosine-nonaketide derivative. The PKS module of xenE acted in combination with the trans-acting enoyl reductase xenG to produce a double-methylated nonaketide attached to the ACP domain. In parallel, the adenylation (A) domain of the NRPS module activated L-tyrosine, which was then transferred to the ACP domain. The condensation (C) domain subsequently linked this group to the polyketide chain, forming an enzyme-bound amide. Reductive release by the C-terminal R domain afforded the aldehyde derivative. The alpha/beta hydrolase xenA then accelerates intramolecular nucleophilic attack to give a pyrrolidone derivative. Subsequently, three enzymes, xenF, xenD, and xenC, coordinately participate in the conversion to xenoacremone B. XenF catalyzes sigmatropic rearrangement to form an A-ring, which leads to an unusual intermediate with a hexane ring, which is required for the formation of the tricarbocyclic product. Epoxidation catalyzed by xenD and the formation of the paracyclophane ether catalyzed by xenC initiate a spontaneous intramolecular Diels-Alder (IMDA) reaction to yield xenoacremone B. Spontaneous hydration of xenoacremone B leads to the formation of xenoacremone A, which undergoes subsequent methylation to afford xenoacremone C. The polypeptide is Hybrid PKS-NRPS synthetase xenE (Xenoacremonium sinensis (Endophyte fungus)).